A 185-amino-acid polypeptide reads, in one-letter code: Photosystem I assembly protein Ycf4 (185 aa).

Transmembrane regions (helical) follow at residues 20-40 (GNFFWACILFLGSLGFLSVGA) and 57-77 (ILFFPQGVVMSFYGIAGLFIS).

It belongs to the Ycf4 family.

It is found in the plastid. The protein localises to the chloroplast thylakoid membrane. Functionally, seems to be required for the assembly of the photosystem I complex. The polypeptide is Photosystem I assembly protein Ycf4 (Agrostis stolonifera (Creeping bentgrass)).